Consider the following 555-residue polypeptide: Cyclin-T1.2 (555 aa).

Disordered regions lie at residues 315 to 429 (SYKG…NSSK) and 505 to 555 (PADS…GELV). A compositionally biased stretch (low complexity) spans 321-335 (KPLSNSSDSPSTRPS). A compositionally biased stretch (basic and acidic residues) spans 341–359 (KNQKVVEQELMEQRMKEAA). Residues 382 to 398 (TSSSASNNSNHQNRSSS) show a composition bias toward low complexity. Pro residues predominate over residues 521–543 (PDEPSPPVSQILLPPPPPPPILP).

It belongs to the cyclin family. Cyclin C subfamily.

In terms of biological role, regulatory subunit of the cyclin-dependent kinase pair (CDK9/cyclin T) complex, also called positive transcription elongation factor B (P-TEFb), which is proposed to facilitate the transition from abortive to production elongation by phosphorylating the CTD (carboxy-terminal domain) of the large subunit of RNA polymerase II (RNAP II). This Caenorhabditis elegans protein is Cyclin-T1.2 (cit-1.2).